Consider the following 161-residue polypeptide: MSIEIRKLSIEDLETLIEVARESWKWTYAGIYSEEYIESWIREKYSKEKLLNEIVRSQSNLDILFLGAFADSTLIGFIELKIIANKAELLRLYLKPEYTHKKIGKTLLLEAEKIMKKKGILECRLYVHRQNSVGFSFYYKNGFKVEDTDGSDFIMEKKYES.

In terms of domain architecture, N-acetyltransferase spans 3 to 160 (IEIRKLSIED…SDFIMEKKYE (158 aa)). Acetyl-CoA is bound by residues 92-94 (LYL), 99-104 (THKKIG), asparagine 131, and serine 136. Catalysis depends on tyrosine 138, which acts as the Proton donor. Position 140 (lysine 140) interacts with acetyl-CoA.

Belongs to the acetyltransferase family. As to quaternary structure, monomer or homodimer.

It catalyses the reaction an alkane-alpha,omega-diamine + acetyl-CoA = an N-acetylalkane-alpha,omega-diamine + CoA + H(+). Functionally, involved in the protection against polyamine toxicity by regulating their concentration. Could also be involved in the negative control of sporulation as well as production of degradative enzymes such as alpha-amylase, levansucrase and alkaline phosphatase. Catalyzes the transfer of an acetyl group from acetyl coenzyme A (AcCoA) to an acceptor substrate and release both CoA and the acetylated product. It can use a variety of substrates including spermidine, L-tryptophan, L-leucine, L-lysine, dopamine and tyramine. In Thermoplasma acidophilum (strain ATCC 25905 / DSM 1728 / JCM 9062 / NBRC 15155 / AMRC-C165), this protein is Spermidine N(1)-acetyltransferase.